Here is a 212-residue protein sequence, read N- to C-terminus: Ribonuclease HII (212 aa).

The RNase H type-2 domain occupies 12 to 201 (ELVAGVDEVG…VRAMLEQVSI (190 aa)). The a divalent metal cation site is built by Asp18, Glu19, and Asp110.

This sequence belongs to the RNase HII family. It depends on Mn(2+) as a cofactor. The cofactor is Mg(2+).

The protein localises to the cytoplasm. The enzyme catalyses Endonucleolytic cleavage to 5'-phosphomonoester.. Endonuclease that specifically degrades the RNA of RNA-DNA hybrids. The protein is Ribonuclease HII of Stutzerimonas stutzeri (strain A1501) (Pseudomonas stutzeri).